A 151-amino-acid polypeptide reads, in one-letter code: Large ribosomal subunit protein bL9 (151 aa).

The protein belongs to the bacterial ribosomal protein bL9 family.

Functionally, binds to the 23S rRNA. This Lacticaseibacillus casei (strain BL23) (Lactobacillus casei) protein is Large ribosomal subunit protein bL9.